Reading from the N-terminus, the 222-residue chain is Superoxide dismutase [Mn], mitochondrial (222 aa).

The N-terminal 24 residues, 1-24 (MLSRAVCGTSRQLAPVLGYLGSRQ), are a transit peptide targeting the mitochondrion. Position 50 (His-50) interacts with Mn(2+). 3'-nitrotyrosine is present on Tyr-58. Residues Lys-68 and Lys-75 each carry the N6-acetyllysine; alternate modification. Lys-68 and Lys-75 each carry N6-succinyllysine; alternate. His-98 serves as a coordination point for Mn(2+). The residue at position 114 (Lys-114) is an N6-acetyllysine. An N6-acetyllysine; alternate mark is found at Lys-122 and Lys-130. An N6-succinyllysine; alternate mark is found at Lys-122 and Lys-130. The Mn(2+) site is built by Asp-183 and His-187. Lys-202 is subject to N6-acetyllysine.

It belongs to the iron/manganese superoxide dismutase family. In terms of assembly, homotetramer. Mn(2+) is required as a cofactor. Post-translationally, nitrated under oxidative stress. Nitration coupled with oxidation inhibits the catalytic activity. Acetylation at Lys-122 decreases enzymatic activity. Deacetylated by SIRT3 upon exposure to ionizing radiations or after long fasting. In terms of processing, polyubiquitinated; leading to proteasomal degradation. Deubiquitinated by USP36 which increases protein stability.

The protein resides in the mitochondrion matrix. The enzyme catalyses 2 superoxide + 2 H(+) = H2O2 + O2. Functionally, destroys superoxide anion radicals which are normally produced within the cells and which are toxic to biological systems. This is Superoxide dismutase [Mn], mitochondrial (SOD2) from Homo sapiens (Human).